Reading from the N-terminus, the 189-residue chain is Elongation factor P (189 aa).

N6-(3,6-diaminohexanoyl)-5-hydroxylysine is present on Lys-34.

It belongs to the elongation factor P family. Post-translationally, may be beta-lysylated on the epsilon-amino group of Lys-34 by the combined action of EpmA and EpmB, and then hydroxylated on the C5 position of the same residue by EpmC (if this protein is present). Lysylation is critical for the stimulatory effect of EF-P on peptide-bond formation. The lysylation moiety may extend toward the peptidyltransferase center and stabilize the terminal 3-CCA end of the tRNA. Hydroxylation of the C5 position on Lys-34 may allow additional potential stabilizing hydrogen-bond interactions with the P-tRNA.

It localises to the cytoplasm. Its pathway is protein biosynthesis; polypeptide chain elongation. In terms of biological role, involved in peptide bond synthesis. Alleviates ribosome stalling that occurs when 3 or more consecutive Pro residues or the sequence PPG is present in a protein, possibly by augmenting the peptidyl transferase activity of the ribosome. Modification of Lys-34 is required for alleviation. The chain is Elongation factor P from Halorhodospira halophila (strain DSM 244 / SL1) (Ectothiorhodospira halophila (strain DSM 244 / SL1)).